The following is a 199-amino-acid chain: Small ribosomal subunit protein uS4B (199 aa).

Residues 88-151 form the S4 RNA-binding domain; it reads CRLDNLVYRT…RKNKIFIDNF (64 aa).

It belongs to the universal ribosomal protein uS4 family. As to quaternary structure, part of the 30S ribosomal subunit. Contacts protein S5. The interaction surface between S4 and S5 is involved in control of translational fidelity.

One of the primary rRNA binding proteins, it binds directly to 16S rRNA where it nucleates assembly of the body of the 30S subunit. Its function is as follows. With S5 and S12 plays an important role in translational accuracy. The sequence is that of Small ribosomal subunit protein uS4B from Alkaliphilus metalliredigens (strain QYMF).